Reading from the N-terminus, the 81-residue chain is Cytochrome b559 subunit alpha (81 aa).

The chain crosses the membrane as a helical span at residues 21–35 (VIHSITIPSLFVSGW). His-23 serves as a coordination point for heme.

Belongs to the PsbE/PsbF family. In terms of assembly, heterodimer of an alpha subunit and a beta subunit. PSII is composed of 1 copy each of membrane proteins PsbA, PsbB, PsbC, PsbD, PsbE, PsbF, PsbH, PsbI, PsbJ, PsbK, PsbL, PsbM, PsbT, PsbX, PsbY, PsbZ, Psb30/Ycf12, at least 3 peripheral proteins of the oxygen-evolving complex and a large number of cofactors. It forms dimeric complexes. Heme b serves as cofactor.

It localises to the plastid. Its subcellular location is the chloroplast thylakoid membrane. This b-type cytochrome is tightly associated with the reaction center of photosystem II (PSII). PSII is a light-driven water:plastoquinone oxidoreductase that uses light energy to abstract electrons from H(2)O, generating O(2) and a proton gradient subsequently used for ATP formation. It consists of a core antenna complex that captures photons, and an electron transfer chain that converts photonic excitation into a charge separation. In Mesostigma viride (Green alga), this protein is Cytochrome b559 subunit alpha.